The chain runs to 276 residues: TIMELESS-interacting protein (276 aa).

The interval Met-1 to Lys-54 is disordered. The interval Leu-64–Ile-140 is interaction with TIMELESS. The span at Ser-217–Leu-243 shows a compositional bias: polar residues. The tract at residues Ser-217–Asp-276 is disordered. The residue at position 219 (Ser-219) is a Phosphoserine. A Phosphothreonine modification is found at Thr-233.

The protein belongs to the CSM3 family. As to quaternary structure, interacts with TIMELESS, which impairs TIMELESS self-association (via N-terminus). Associates with the MCM2-7 complex. Interacts with RPA2, PRDX2.

The protein resides in the cytoplasm. The protein localises to the nucleus. Plays an important role in the control of DNA replication and the maintenance of replication fork stability. Important for cell survival after DNA damage or replication stress. May be specifically required for the ATR-CHEK1 pathway in the replication checkpoint induced by hydroxyurea or ultraviolet light. Forms a complex with TIMELESS and this complex regulates DNA replication processes under both normal and stress conditions, stabilizes replication forks and influences both CHEK1 phosphorylation and the intra-S phase checkpoint in response to genotoxic stress. This is TIMELESS-interacting protein (Tipin) from Rattus norvegicus (Rat).